Consider the following 281-residue polypeptide: Probable endonuclease 4 (281 aa).

Zn(2+)-binding residues include H69, H109, E145, D179, H182, H216, D229, H231, and E261.

This sequence belongs to the AP endonuclease 2 family. The cofactor is Zn(2+).

It carries out the reaction Endonucleolytic cleavage to 5'-phosphooligonucleotide end-products.. Functionally, endonuclease IV plays a role in DNA repair. It cleaves phosphodiester bonds at apurinic or apyrimidinic (AP) sites, generating a 3'-hydroxyl group and a 5'-terminal sugar phosphate. The polypeptide is Probable endonuclease 4 (Chlorobaculum tepidum (strain ATCC 49652 / DSM 12025 / NBRC 103806 / TLS) (Chlorobium tepidum)).